A 780-amino-acid polypeptide reads, in one-letter code: Molybdenum cofactor sulfurase (780 aa).

The residue at position 246 (Lys-246) is an N6-(pyridoxal phosphate)lysine. Cys-413 is an active-site residue. The MOSC domain maps to 635 to 780 (LRLLRQSGQR…MTCGDVVLVE (146 aa)). Ser-734 carries the phosphoserine modification.

This sequence belongs to the class-V pyridoxal-phosphate-dependent aminotransferase family. MOCOS subfamily. It depends on pyridoxal 5'-phosphate as a cofactor.

The catalysed reaction is Mo-molybdopterin + L-cysteine + AH2 = thio-Mo-molybdopterin + L-alanine + A + H2O. In terms of biological role, sulfurates the molybdenum cofactor. Sulfation of molybdenum is essential for xanthine dehydrogenase (XDH) and aldehyde oxidase (ADO) enzymes in which molybdenum cofactor is liganded by 1 oxygen and 1 sulfur atom in active form. This is Molybdenum cofactor sulfurase from Drosophila yakuba (Fruit fly).